Reading from the N-terminus, the 201-residue chain is Sorting nexin-10 (201 aa).

The tract at residues Glu8 to Leu125 is required for interaction with ATP6V1D. Positions Phe10–Ser127 constitute a PX domain. Residues Arg53, Lys79, and Arg94 each contribute to the a 1,2-diacyl-sn-glycero-3-phospho-(1D-myo-inositol-3-phosphate) site. Positions Phe156 to Ser201 are disordered.

Belongs to the sorting nexin family. As to quaternary structure, interacts with ATP6V1D; may play a role in ciliogenesis.

It is found in the cytoplasm. The protein localises to the endosome membrane. It localises to the cytoskeleton. The protein resides in the microtubule organizing center. Its subcellular location is the centrosome. Its function is as follows. Probable phosphoinositide-binding protein involved in protein sorting and membrane trafficking in endosomes. Plays a role in cilium biogenesis through regulation of the transport and the localization of proteins to the cilium. Required for the localization to the cilium of V-ATPase subunit ATP6V1D and ATP6V0D1, and RAB8A. Involved in osteoclast differentiation and therefore bone resorption. The protein is Sorting nexin-10 (SNX10) of Homo sapiens (Human).